Here is a 155-residue protein sequence, read N- to C-terminus: Ribosomal RNA large subunit methyltransferase H (155 aa).

S-adenosyl-L-methionine contacts are provided by residues Leu-73, Gly-104, and 123 to 128 (LSPLTL).

It belongs to the RNA methyltransferase RlmH family. In terms of assembly, homodimer.

It localises to the cytoplasm. The catalysed reaction is pseudouridine(1915) in 23S rRNA + S-adenosyl-L-methionine = N(3)-methylpseudouridine(1915) in 23S rRNA + S-adenosyl-L-homocysteine + H(+). Specifically methylates the pseudouridine at position 1915 (m3Psi1915) in 23S rRNA. This is Ribosomal RNA large subunit methyltransferase H from Stutzerimonas stutzeri (strain A1501) (Pseudomonas stutzeri).